The primary structure comprises 374 residues: tRNA-specific 2-thiouridylase MnmA (374 aa).

ATP-binding positions include 12–19 (GMSGGVDS) and Met38. Residues 98 to 100 (NPD) form an interaction with target base in tRNA region. Cys103 (nucleophile) is an active-site residue. Cys103 and Cys200 are disulfide-bonded. Gly127 lines the ATP pocket. The tract at residues 150–152 (KDQ) is interaction with tRNA. Cys200 functions as the Cysteine persulfide intermediate in the catalytic mechanism. Residues 311-312 (RY) are interaction with tRNA.

This sequence belongs to the MnmA/TRMU family.

The protein resides in the cytoplasm. It catalyses the reaction S-sulfanyl-L-cysteinyl-[protein] + uridine(34) in tRNA + AH2 + ATP = 2-thiouridine(34) in tRNA + L-cysteinyl-[protein] + A + AMP + diphosphate + H(+). Catalyzes the 2-thiolation of uridine at the wobble position (U34) of tRNA, leading to the formation of s(2)U34. This chain is tRNA-specific 2-thiouridylase MnmA, found in Lactiplantibacillus plantarum (strain ATCC BAA-793 / NCIMB 8826 / WCFS1) (Lactobacillus plantarum).